The following is a 120-amino-acid chain: uncharacterized protein (120 aa).

Residues 1–16 (MFKFILLCFCINFAFS) form the signal peptide.

This is an uncharacterized protein from Acheta domesticus (House cricket).